The following is a 1136-amino-acid chain: Probable RNA-dependent RNA polymerase 2 (1136 aa).

The segment at 965–989 is disordered; sequence SGDSGALSSSSAQPSPTYDPDLEVP. Low complexity predominate over residues 967–980; it reads DSGALSSSSAQPSP.

Belongs to the RdRP family.

It carries out the reaction RNA(n) + a ribonucleoside 5'-triphosphate = RNA(n+1) + diphosphate. In terms of biological role, probably involved in the RNA silencing pathway and required for the generation of small interfering RNAs (siRNAs). This is Probable RNA-dependent RNA polymerase 2 (RDR2) from Oryza sativa subsp. japonica (Rice).